The primary structure comprises 2335 residues: Pre-mRNA-processing-splicing factor 8 (2335 aa).

Ala-2 is subject to N-acetylalanine. Residues 812–1303 (TTVHWLESRR…KIQTRIKIGL (492 aa)) form a reverse transcriptase homology domain region. 2 positions are modified to phosphoserine: Ser-859 and Ser-1358. The segment at 1304–1577 (NSKMPSRFPP…TLKISLIQIF (274 aa)) is linker. Lys-1425 carries the N6,N6-dimethyllysine modification. N6-acetyllysine is present on Lys-1463. The important for branch point selection stretch occupies residues 1513-1526 (MKWKKLTNAQRSGL). Positions 1581–1752 (LWQKIHESIV…LRERIRKGLQ (172 aa)) are restriction endonuclease homology domain. The involved in interaction with pre-mRNA 5' splice site stretch occupies residues 1669–2034 (GDYDSHDIER…QIAEIEKQTK (366 aa)). An RNase H homology domain region spans residues 1767 to 2020 (NYGELFSNQI…ILGMEISAPS (254 aa)). In terms of domain architecture, MPN spans 2103–2234 (TYILPKNVLK…LTAYKLTPSG (132 aa)). Residues 2301–2335 (PKEFYHEVHRPSHFLNFALLQEGEVYSADREDLYA) form a required for interaction with EFTUD2 and SNRNP200 region.

As to quaternary structure, part of the U5 snRNP complex. Component of the U4/U6-U5 tri-snRNP complex composed of the U4, U6 and U5 snRNAs and at least PRPF3, PRPF4, PRPF6, PRPF8, PRPF31, SNRNP200, TXNL4A, SNRNP40, DDX23, CD2BP2, PPIH, SNU13, EFTUD2, SART1 and USP39. Component of the U5.U4atac/U6atac snRNP complexes in U12-dependent spliceosomes. Within the minor spliceosome, which acts on U12-type introns, interacts with PPIL2 and RBM48. Core component of U2-type precatalytic, catalytic and postcatalytic spliceosomal complexes. Found in a mRNA splicing-dependent exon junction complex (EJC) with SRRM1. Interacts with U5 snRNP proteins SNRP116 and SNRNP40. Interacts with EFTUD2. Interacts (via the MPN (JAB/Mov34) domain) with PRPF3 ('Lys-63'-linked polyubiquitinated); may stabilize the U4/U6-U5 tri-snRNP complex. Interacts (via RNase H homology domain) with AAR2. Interacts with RPAP3 and URI1 in a ZNHIT2-dependent manner. Interacts with C9orf78. Interacts with SNRNP200; the interaction is direct. Interacts with TSSC4; the interaction is direct. In terms of tissue distribution, widely expressed.

It localises to the nucleus. The protein resides in the nucleus speckle. In terms of biological role, plays a role in pre-mRNA splicing as core component of precatalytic, catalytic and postcatalytic spliceosomal complexes, both of the predominant U2-type spliceosome and the minor U12-type spliceosome. Functions as a scaffold that mediates the ordered assembly of spliceosomal proteins and snRNAs. Required for the assembly of the U4/U6-U5 tri-snRNP complex, a building block of the spliceosome. Functions as a scaffold that positions spliceosomal U2, U5 and U6 snRNAs at splice sites on pre-mRNA substrates, so that splicing can occur. Interacts with both the 5' and the 3' splice site. The sequence is that of Pre-mRNA-processing-splicing factor 8 (PRPF8) from Homo sapiens (Human).